The primary structure comprises 55 residues: Ribosome modulation factor (55 aa).

The protein belongs to the ribosome modulation factor family. As to quaternary structure, associates exclusively with 100S ribosomes.

It is found in the cytoplasm. During stationary phase, converts 70S ribosomes to an inactive dimeric form (100S ribosomes). May form immature 90S particles, which are converted to mature 100S ribosomes by the hibernation promoting factor Hpf. The chain is Ribosome modulation factor from Escherichia coli O157:H7.